A 140-amino-acid polypeptide reads, in one-letter code: Large ribosomal subunit protein uL24 (140 aa).

The protein belongs to the universal ribosomal protein uL24 family. In terms of assembly, part of the 50S ribosomal subunit.

Its function is as follows. One of two assembly initiator proteins, it binds directly to the 5'-end of the 23S rRNA, where it nucleates assembly of the 50S subunit. In terms of biological role, located at the polypeptide exit tunnel on the outside of the subunit. The protein is Large ribosomal subunit protein uL24 of Nanoarchaeum equitans (strain Kin4-M).